A 615-amino-acid chain; its full sequence is Zinc finger protein 653 (615 aa).

4 disordered regions span residues 1-48 (MAER…ARRR), 95-117 (RSGRHGKPWEQVPKKPKRKKRRR), 176-236 (PLSD…SSGL), and 401-432 (EEKEEPVAPELATTVPESAEPEAEADGEELDG). The short motif at 107-118 (PKKPKRKKRRRR) is the Nuclear localization signal element. The span at 108–117 (KKPKRKKRRR) shows a compositional bias: basic residues. The segment covering 193-205 (AGSSDSSSSGSAS) has biased composition (low complexity). A compositionally biased stretch (polar residues) spans 226-236 (TPTSPVGSSGL). The segment covering 419–432 (AEPEAEADGEELDG) has biased composition (acidic residues). The Nuclear localization signal motif lies at 445–451 (EPEKRRR). 5 C2H2-type zinc fingers span residues 467–492 (FHCPYEGCSQVYVALSSFQNHVNLVH), 498–522 (KVCPHPGCGKKFYLSNHLRRHMIIH), 528–550 (FTCETCGKSFKRKNHLEVHRRTH), 556–578 (LQCEICGYQCRQRASLNWHMKKH), and 586–609 (FTCDRCGKRFEKLDSVKFHTLKSH).

This sequence belongs to the krueppel C2H2-type zinc-finger protein family. As to quaternary structure, interacts with NR5A1. As to expression, highly expressed in testis, cerebellum, temporal lobe, hippocampus and the adrenal gland. Moderately expressed in spleen, uterus, thymus, pancreas, kidney, stomach and rectum.

It is found in the nucleus. Functionally, transcriptional repressor. May repress NR5A1, PPARG, NR1H3, NR4A2, ESR1 and NR3C1 transcriptional activity. In Homo sapiens (Human), this protein is Zinc finger protein 653 (ZNF653).